The following is a 590-amino-acid chain: Acyl-CoA ligase sidI (590 aa).

A PTS2-type peroxisomal targeting signal motif is present at residues 6 to 14 (RLQQTLSHL). ATP is bound by residues 220 to 228 (TSGSTGNPK), 359 to 364 (SSYGLT), Asp-449, and Arg-464. Thr-364 contributes to the substrate binding site. Residues 472 to 474 (GGE) and 543 to 545 (YFF) contribute to the CoA site. Lys-563 serves as a coordination point for ATP.

This sequence belongs to the ATP-dependent AMP-binding enzyme family.

The protein resides in the peroxisome. Its pathway is siderophore biosynthesis. In terms of biological role, acyl-CoA ligase; part of the siderophore biosynthetic pathway. Aspergillus fumigatus produces 4 types of siderophores, low-molecular-mass iron chelators, including excreted fusarinine C (FsC) and triacetylfusarinine C (TAFC) for iron uptake and intacellular ferricrocin (FC) for hyphal and hydroxyferricrocin (HFC) for conidial iron distribution and storage. TAFC consists of 3 N(2)-acetyl-N(5)-anhydromevalonyl-N(5)-hydroxyornithine residues cyclically linked by ester bonds; FC is a cyclic hexapeptide with the structure Gly-Ser-Gly-(N(5)-acetyl-N(5)-hydroxyornithine)x3. The biosynthesis of all four siderophores depends on the hydroxylation of ornithine, catalyzed by the monooxygenase sidA. Subsequently, the pathways for biosynthesis of extra- and intracellular siderophores split. For biosynthesis of extracellular siderophores, the transacylase sidF transfers anhydromevalonyl to N(5)-hydroxyornithine. The required anhydromevalonyl-CoA moiety is derived from mevalonate by CoA ligation and dehydration catalyzed by sidI and sidH respectively. The acetylation of N(5)-hydroxyornithine for FC biosynthesis involves the constitutively expressed sidL. FC is hydroxylated to HFC by an as yet uncharacterized enzyme during conidiation. Assembly of fusarinine C (FsC) and FC is catalyzed by two different nonribosomal peptide synthetases (NRPS), sidD and sidC respectively. Subsequently, sidG catalyzes N2-acetylation of FsC for forming TAFC. Both extra- and intracellular siderophores are crucial for growth during iron limitation and virulence. In Aspergillus fumigatus (strain ATCC MYA-4609 / CBS 101355 / FGSC A1100 / Af293) (Neosartorya fumigata), this protein is Acyl-CoA ligase sidI.